The sequence spans 211 residues: RING finger protein narya (211 aa).

An RING-type zinc finger spans residues 6 to 47 (CNKCFRHRKTDPAVPFHLTQCRHVICGPCLGQSSLEKNCPLC). A disordered region spans residues 149-211 (RRRHSAGERF…FGSDTKGFRL (63 aa)). The segment covering 153 to 165 (SAGERFHTPEFKE) has biased composition (basic and acidic residues). The segment covering 172-184 (STSDKSPSDMPSD) has biased composition (low complexity).

May interact with itself, with nenya and vilya through its RING-type zinc finger. As to expression, expressed in nurse cell and pro-oocytes (at protein level).

The protein resides in the chromosome. Its function is as follows. Required for the formation of DNA double-strand breaks (DSBs) together with nenya and vilya during the meiotic recombination process. Plays a role in DSBs processing into crossovers. Plays a redundant role with nenya in chromosome segregation during female meiosis. The protein is RING finger protein narya of Drosophila melanogaster (Fruit fly).